Reading from the N-terminus, the 294-residue chain is Nucleotide-binding protein Cbei_4857 (294 aa).

An ATP-binding site is contributed by 8–15 (GLSGAGKT). 59 to 62 (DIRG) contacts GTP.

It belongs to the RapZ-like family.

Displays ATPase and GTPase activities. In Clostridium beijerinckii (strain ATCC 51743 / NCIMB 8052) (Clostridium acetobutylicum), this protein is Nucleotide-binding protein Cbei_4857.